The following is a 728-amino-acid chain: Ribosome biogenesis protein bop1-A (728 aa).

Residues 1–114 are disordered; that stretch reads MKRGSQGEAG…ENDSSDEEDI (114 aa). Positions 55-67 are enriched in acidic residues; sequence SDDEEDHWSEEEE. A compositionally biased stretch (basic and acidic residues) spans 68 to 77; sequence NPGKSPKEII. WD repeat units lie at residues 393–432, 434–474, 514–556, 559–597, 600–639, 643–682, and 698–728; these read GHKD…CMKS, VLEG…RLLC, KHQK…SQNP, KNKG…LTKK, TNCK…KPYK, HHKK…DLLQ, and HRDL…RLFT.

Belongs to the WD repeat BOP1/ERB1 family. In terms of assembly, component of the PeBoW complex, composed of bop1, pes1 and wdr12. The complex is held together by bop1, which interacts with pes1 via its N-terminal domain and with wdr12 via a high-affinity interaction between the seven-bladed beta-propeller domains of the 2 proteins. The PeBoW complex associates with the 66S pre-ribosome.

The protein resides in the nucleus. Its subcellular location is the nucleolus. It localises to the nucleoplasm. Functionally, component of the PeBoW complex, which is required for maturation of 28S and 5.8S ribosomal RNAs and formation of the 60S ribosome. This Xenopus laevis (African clawed frog) protein is Ribosome biogenesis protein bop1-A (bop1-a).